Here is a 207-residue protein sequence, read N- to C-terminus: 2,3-bisphosphoglycerate-dependent phosphoglycerate mutase (207 aa).

Substrate contacts are provided by residues 10–17 (RHGQSEWN), 23–24 (TG), Arg62, 89–92 (ERDY), Lys100, 116–117 (RR), and 160–161 (GN). The active-site Tele-phosphohistidine intermediate is the His11. The Proton donor/acceptor role is filled by Glu89.

It belongs to the phosphoglycerate mutase family. BPG-dependent PGAM subfamily. In terms of assembly, homodimer.

The catalysed reaction is (2R)-2-phosphoglycerate = (2R)-3-phosphoglycerate. It participates in carbohydrate degradation; glycolysis; pyruvate from D-glyceraldehyde 3-phosphate: step 3/5. Its function is as follows. Catalyzes the interconversion of 2-phosphoglycerate and 3-phosphoglycerate. This Afipia carboxidovorans (strain ATCC 49405 / DSM 1227 / KCTC 32145 / OM5) (Oligotropha carboxidovorans) protein is 2,3-bisphosphoglycerate-dependent phosphoglycerate mutase.